The chain runs to 369 residues: Deoxyhypusine synthase (369 aa).

NAD(+) contacts are provided by residues 105 to 109 (SNLIS), 131 to 133 (TAG), Glu-137, and Asp-238. 136–137 (EE) contributes to the spermidine binding site. Asp-243 contacts spermidine. An NAD(+)-binding site is contributed by Gly-283. His-288 provides a ligand contact to spermidine. 308-309 (TA) is an NAD(+) binding site. Residues 314-316 (GSD) and 323-329 (EAVSWGK) contribute to the spermidine site. The active-site Nucleophile is the Lys-329. 342–343 (DA) is a binding site for NAD(+).

It belongs to the deoxyhypusine synthase family. NAD(+) serves as cofactor.

The enzyme catalyses [eIF5A protein]-L-lysine + spermidine = [eIF5A protein]-deoxyhypusine + propane-1,3-diamine. The protein operates within protein modification; eIF5A hypusination. Its function is as follows. Catalyzes the NAD-dependent oxidative cleavage of spermidine and the subsequent transfer of the butylamine moiety of spermidine to the epsilon-amino group of a critical lysine residue of the eIF-5A precursor protein to form the intermediate deoxyhypusine residue. This is the first step of the post-translational modification of that lysine into an unusual amino acid residue named hypusine. Hypusination is unique to mature eIF-5A factor and is essential for its function. The protein is Deoxyhypusine synthase (Dhps) of Mus musculus (Mouse).